Consider the following 159-residue polypeptide: Transcription elongation factor GreA (159 aa).

The stretch at 43 to 75 (LSENAEYDAAREEQSQLEAKIGEIENKLASATI) forms a coiled coil.

Belongs to the GreA/GreB family.

In terms of biological role, necessary for efficient RNA polymerase transcription elongation past template-encoded arresting sites. The arresting sites in DNA have the property of trapping a certain fraction of elongating RNA polymerases that pass through, resulting in locked ternary complexes. Cleavage of the nascent transcript by cleavage factors such as GreA or GreB allows the resumption of elongation from the new 3'terminus. GreA releases sequences of 2 to 3 nucleotides. This chain is Transcription elongation factor GreA, found in Chlorobaculum tepidum (strain ATCC 49652 / DSM 12025 / NBRC 103806 / TLS) (Chlorobium tepidum).